The chain runs to 266 residues: Ribosomal RNA small subunit methyltransferase A (266 aa).

6 residues coordinate S-adenosyl-L-methionine: Asn-16, Leu-18, Gly-43, Glu-64, Asp-89, and Asn-110.

It belongs to the class I-like SAM-binding methyltransferase superfamily. rRNA adenine N(6)-methyltransferase family. RsmA subfamily.

The protein localises to the cytoplasm. It catalyses the reaction adenosine(1518)/adenosine(1519) in 16S rRNA + 4 S-adenosyl-L-methionine = N(6)-dimethyladenosine(1518)/N(6)-dimethyladenosine(1519) in 16S rRNA + 4 S-adenosyl-L-homocysteine + 4 H(+). In terms of biological role, specifically dimethylates two adjacent adenosines (A1518 and A1519) in the loop of a conserved hairpin near the 3'-end of 16S rRNA in the 30S particle. May play a critical role in biogenesis of 30S subunits. The sequence is that of Ribosomal RNA small subunit methyltransferase A from Marinomonas sp. (strain MWYL1).